The chain runs to 531 residues: Probable mitochondrial-processing peptidase subunit beta, mitochondrial (531 aa).

Residues 1–78 (MAMKNLLSLA…ENPDKRFLKY (78 aa)) constitute a mitochondrion transit peptide. The segment at 30 to 50 (SAIDSVPASASPTALSPPPPH) is disordered. Residue His-141 coordinates Zn(2+). Glu-144 serves as the catalytic Proton acceptor. Position 145 (His-145) interacts with Zn(2+). Residue Glu-214 is part of the active site. Glu-221 lines the Zn(2+) pocket.

This sequence belongs to the peptidase M16 family. Heterodimer of an alpha subunit and a beta subunit subunits, forming the mitochondrial processing protease (MPP) in which the alpha subunit is involved in substrate recognition and binding and the beta subunit is the catalytic subunit. Component of the ubiquinol-cytochrome c oxidoreductase (cytochrome b-c1 complex, complex III, CIII), a multisubunit enzyme composed of 10 subunits. The complex is composed of 3 respiratory subunits cytochrome b (MT-CYB), cytochrome c1 (CYC1-1 or CYC1-2) and Rieske protein (UCR1-1 or UCR1-2), 2 core protein subunits MPPalpha1 (or MPPalpha2) and MPPB, and 5 low-molecular weight protein subunits QCR7-1 (or QCR7-2), UCRQ-1 (or UCRQ-2), QCR9, UCRY and probably QCR6-1 (or QCR6-2). The complex exists as an obligatory dimer and forms supercomplexes (SCs) in the inner mitochondrial membrane with NADH-ubiquinone oxidoreductase (complex I, CI), resulting in different assemblies (supercomplexes SCI(1)III(2) and SCI(2)III(4)). Zn(2+) is required as a cofactor.

Its subcellular location is the mitochondrion. It localises to the mitochondrion inner membrane. The catalysed reaction is Release of N-terminal transit peptides from precursor proteins imported into the mitochondrion, typically with Arg in position P2.. Binding to the alpha subunit is required for catalytic activity. Functionally, catalytic subunit of the essential mitochondrial processing protease (MPP), which cleaves the mitochondrial sequence off newly imported precursors proteins. Preferentially, cleaves after an arginine at position P2. Component of the ubiquinol-cytochrome c oxidoreductase, a multisubunit transmembrane complex that is part of the mitochondrial electron transport chain which drives oxidative phosphorylation. The respiratory chain contains 3 multisubunit complexes succinate dehydrogenase (complex II, CII), ubiquinol-cytochrome c oxidoreductase (cytochrome b-c1 complex, complex III, CIII) and cytochrome c oxidase (complex IV, CIV), that cooperate to transfer electrons derived from NADH and succinate to molecular oxygen, creating an electrochemical gradient over the inner membrane that drives transmembrane transport and the ATP synthase. The cytochrome b-c1 complex catalyzes electron transfer from ubiquinol to cytochrome c, linking this redox reaction to translocation of protons across the mitochondrial inner membrane, with protons being carried across the membrane as hydrogens on the quinol. In the process called Q cycle, 2 protons are consumed from the matrix, 4 protons are released into the intermembrane space and 2 electrons are passed to cytochrome c. This chain is Probable mitochondrial-processing peptidase subunit beta, mitochondrial (MPPbeta), found in Arabidopsis thaliana (Mouse-ear cress).